The chain runs to 882 residues: Piwi-like protein 3 (882 aa).

A compositionally biased stretch (basic residues) spans 1 to 15 (MPGRARTRARGRARR). The segment at 1–91 (MPGRARTRAR…EAGLHTAPLQ (91 aa)) is disordered. Positions 32 to 46 (SATTQEPPQLQSTPR) are enriched in polar residues. One can recognise a PAZ domain in the interval 293–406 (TAYDFIKRTS…LIPQLCHMTG (114 aa)). Positions 578 to 868 (KVICILPNDD…LAYLVGQSIH (291 aa)) constitute a Piwi domain.

Belongs to the argonaute family. Piwi subfamily. As to expression, expressed in testis.

It is found in the cytoplasm. May play a role during spermatogenesis by repressing transposable elements and preventing their mobilization, which is essential for the germline integrity. Acts via the piRNA metabolic process, which mediates the repression of transposable elements during meiosis by forming complexes composed of piRNAs and Piwi proteins and govern the methylation and subsequent repression of transposons. Directly binds piRNAs, a class of 24 to 30 nucleotide RNAs that are generated by a Dicer-independent mechanism and are primarily derived from transposons and other repeated sequence elements. Besides their function in transposable elements repression, piRNAs are probably involved in other processes during meiosis such as translation regulation. The protein is Piwi-like protein 3 (PIWIL3) of Homo sapiens (Human).